The sequence spans 283 residues: Protein/nucleic acid deglycase HchA (283 aa).

Residues His86, Glu91, and His123 each coordinate Zn(2+). Cys185 acts as the Nucleophile in catalysis.

The protein belongs to the peptidase C56 family. HchA subfamily. In terms of assembly, homodimer.

Its subcellular location is the cytoplasm. It carries out the reaction N(omega)-(1-hydroxy-2-oxopropyl)-L-arginyl-[protein] + H2O = lactate + L-arginyl-[protein] + H(+). The enzyme catalyses N(6)-(1-hydroxy-2-oxopropyl)-L-lysyl-[protein] + H2O = lactate + L-lysyl-[protein] + H(+). The catalysed reaction is S-(1-hydroxy-2-oxopropyl)-L-cysteinyl-[protein] + H2O = lactate + L-cysteinyl-[protein] + H(+). It catalyses the reaction N(omega)-(1-hydroxy-2-oxoethyl)-L-arginyl-[protein] + H2O = L-arginyl-[protein] + glycolate + H(+). It carries out the reaction N(6)-(1-hydroxy-2-oxoethyl)-L-lysyl-[protein] + H2O = glycolate + L-lysyl-[protein] + H(+). The enzyme catalyses S-(1-hydroxy-2-oxoethyl)-L-cysteinyl-[protein] + H2O = glycolate + L-cysteinyl-[protein] + H(+). The catalysed reaction is N(2)-(1-hydroxy-2-oxopropyl)-dGTP + H2O = lactate + dGTP + H(+). It catalyses the reaction N(2)-(1-hydroxy-2-oxopropyl)-GTP + H2O = lactate + GTP + H(+). It carries out the reaction N(2)-(1-hydroxy-2-oxopropyl)-GDP + H2O = lactate + GDP + H(+). The enzyme catalyses N(2)-(1-hydroxy-2-oxopropyl)-GMP + H2O = lactate + GMP + H(+). The catalysed reaction is N(2)-(1-hydroxy-2-oxoethyl)-dGTP + H2O = dGTP + glycolate + H(+). It catalyses the reaction N(2)-(1-hydroxy-2-oxoethyl)-GTP + H2O = glycolate + GTP + H(+). It carries out the reaction N(2)-(1-hydroxy-2-oxoethyl)-GDP + H2O = glycolate + GDP + H(+). The enzyme catalyses N(2)-(1-hydroxy-2-oxoethyl)-GMP + H2O = glycolate + GMP + H(+). The catalysed reaction is an N(2)-(1-hydroxy-2-oxopropyl)-guanosine in RNA + H2O = a guanosine in RNA + lactate + H(+). It catalyses the reaction an N(2)-(1-hydroxy-2-oxopropyl)-2'-deoxyguanosine in DNA + H2O = a 2'-deoxyguanosine in DNA + lactate + H(+). It carries out the reaction an N(2)-(1-hydroxy-2-oxoethyl)-guanosine in RNA + H2O = a guanosine in RNA + glycolate + H(+). The enzyme catalyses an N(2)-(1-hydroxy-2-oxoethyl)-2'-deoxyguanosine in DNA + H2O = a 2'-deoxyguanosine in DNA + glycolate + H(+). Its function is as follows. Protein and nucleotide deglycase that catalyzes the deglycation of the Maillard adducts formed between amino groups of proteins or nucleotides and reactive carbonyl groups of glyoxals. Thus, functions as a protein deglycase that repairs methylglyoxal- and glyoxal-glycated proteins, and releases repaired proteins and lactate or glycolate, respectively. Deglycates cysteine, arginine and lysine residues in proteins, and thus reactivates these proteins by reversing glycation by glyoxals. Acts on early glycation intermediates (hemithioacetals and aminocarbinols), preventing the formation of Schiff bases and advanced glycation endproducts (AGE). Also functions as a nucleotide deglycase able to repair glycated guanine in the free nucleotide pool (GTP, GDP, GMP, dGTP) and in DNA and RNA. Is thus involved in a major nucleotide repair system named guanine glycation repair (GG repair), dedicated to reversing methylglyoxal and glyoxal damage via nucleotide sanitization and direct nucleic acid repair. Plays an important role in protecting cells from carbonyl stress. This Shigella flexneri protein is Protein/nucleic acid deglycase HchA.